The sequence spans 62 residues: Delta-theraphotoxin-Cg1a 3 (62 aa).

Positions 1-21 are cleaved as a signal peptide; sequence MKTSILFVIFSLALVFALSPA. Positions 22–29 are excised as a propeptide; the sequence is TEIEETDR. 3 cysteine pairs are disulfide-bonded: Cys-31–Cys-46, Cys-38–Cys-51, and Cys-45–Cys-58.

This sequence belongs to the neurotoxin 10 (Hwtx-1) family. 33 (Jztx-1) subfamily. In terms of tissue distribution, expressed by the venom gland.

It localises to the secreted. Its function is as follows. Moderately inhibits voltage-gated sodium channels and weakly inhibits voltage-gated potassium channel. Inhibits the inactivation of rat Nav1.2/SCN2A (IC(50)=870 nM), rat Nav1.3/SCN3A (IC(50)=845 nM), rat Nav1.4/SCN4A (IC(50)=339 nM), human Nav1.5/SCN5A (IC(50)=335 nM) and human Nav1.7/SCN9A sodium channels (IC(50)=348 nM). The toxin delays the inactivation of sodium channels without affecting the activation and steady-state inactivation kinetics in the physiological range of voltages. Site-directed mutagenesis of the sodium channel indicates that the toxin interacts with site 3 located at the extracellular S3-S4 linker of domain IV. On potassium channels, it inhibits activation of channels with an IC(50) of 8.05 uM through a voltage sensor-trapping mechanism. It increases muscle contraction in several assays (mouse phrenic nerve-diaphragm, toad heart, rat vas deferens) and is suggested to act both presynaptically and postsynaptically. This chain is Delta-theraphotoxin-Cg1a 3, found in Chilobrachys guangxiensis (Chinese earth tiger tarantula).